The chain runs to 436 residues: tRNA-2-methylthio-N(6)-dimethylallyladenosine synthase (436 aa).

In terms of domain architecture, MTTase N-terminal spans 5-121 (RKLFIKTYGC…LPDMLDRTEG (117 aa)). [4Fe-4S] cluster contacts are provided by cysteine 14, cysteine 50, cysteine 84, cysteine 158, cysteine 162, and cysteine 165. The Radical SAM core domain occupies 144–374 (ATRGPAAFLT…TEQQRAAQMA (231 aa)). A TRAM domain is found at 373-435 (MAMVGREVGV…PNSLAGERLG (63 aa)).

This sequence belongs to the methylthiotransferase family. MiaB subfamily. As to quaternary structure, monomer. The cofactor is [4Fe-4S] cluster.

Its subcellular location is the cytoplasm. It carries out the reaction N(6)-dimethylallyladenosine(37) in tRNA + (sulfur carrier)-SH + AH2 + 2 S-adenosyl-L-methionine = 2-methylsulfanyl-N(6)-dimethylallyladenosine(37) in tRNA + (sulfur carrier)-H + 5'-deoxyadenosine + L-methionine + A + S-adenosyl-L-homocysteine + 2 H(+). Catalyzes the methylthiolation of N6-(dimethylallyl)adenosine (i(6)A), leading to the formation of 2-methylthio-N6-(dimethylallyl)adenosine (ms(2)i(6)A) at position 37 in tRNAs that read codons beginning with uridine. The chain is tRNA-2-methylthio-N(6)-dimethylallyladenosine synthase from Cereibacter sphaeroides (strain ATCC 17029 / ATH 2.4.9) (Rhodobacter sphaeroides).